Consider the following 304-residue polypeptide: Large ribosomal subunit protein uL18z (304 aa).

The disordered stretch occupies residues 285 to 304 (LNALNSSAGADDDDEEEDDE). The span at 294–304 (ADDDDEEEDDE) shows a compositional bias: acidic residues.

The protein belongs to the universal ribosomal protein uL18 family. Component of the large ribosomal subunit (LSU).

The protein localises to the cytoplasm. The protein resides in the nucleus. Its function is as follows. Component of the ribosome, a large ribonucleoprotein complex responsible for the synthesis of proteins in the cell. The small ribosomal subunit (SSU) binds messenger RNAs (mRNAs) and translates the encoded message by selecting cognate aminoacyl-transfer RNA (tRNA) molecules. The large subunit (LSU) contains the ribosomal catalytic site termed the peptidyl transferase center (PTC), which catalyzes the formation of peptide bonds, thereby polymerizing the amino acids delivered by tRNAs into a polypeptide chain. The nascent polypeptides leave the ribosome through a tunnel in the LSU and interact with protein factors that function in enzymatic processing, targeting, and the membrane insertion of nascent chains at the exit of the ribosomal tunnel. The sequence is that of Large ribosomal subunit protein uL18z (RPL5A) from Oryza sativa subsp. japonica (Rice).